Reading from the N-terminus, the 1792-residue chain is Non-reducing polyketide synthase aptA (1792 aa).

Residues 1–395 (MKDNTHSTTL…PRSFAHSKLA (395 aa)) form an N-terminal acylcarrier protein transacylase domain (SAT) region. One can recognise a Ketosynthase family 3 (KS3) domain in the interval 391–824 (HSKLAVVGMA…GGNTTVLLED (434 aa)). Residues cysteine 564, histidine 699, and histidine 742 each act as for beta-ketoacyl synthase activity in the active site. The tract at residues 926–1243 (VFAFTGQGAF…NLVALHLAGC (318 aa)) is malonyl-CoA:ACP transacylase (MAT) domain. The interval 1308–1625 (TSLIHEIIEE…PRLLMDRFFS (318 aa)) is product template (PT) domain. The N-terminal hotdog fold stretch occupies residues 1312–1447 (HEIIEETIGE…GSVRFEADAE (136 aa)). The region spanning 1312–1621 (HEIIEETIGE…FRRVPRLLMD (310 aa)) is the PKS/mFAS DH domain. Histidine 1344 functions as the Proton acceptor; for dehydratase activity in the catalytic mechanism. A C-terminal hotdog fold region spans residues 1475 to 1621 (QASQLSKALS…FRRVPRLLMD (147 aa)). Aspartate 1533 acts as the Proton donor; for dehydratase activity in catalysis. A compositionally biased stretch (low complexity) spans 1634–1649 (VAASASSAPKTATKHA). A disordered region spans residues 1634 to 1716 (VAASASSAPK…GPNGTTSQPE (83 aa)). A compositionally biased stretch (polar residues) spans 1664 to 1684 (TPSSLPTVQAQNTSPPQQVTP). Positions 1694 to 1705 (TPEEEKPGKADA) are enriched in basic and acidic residues. The Carrier domain occupies 1715-1792 (PEATGVVGQC…DMMDWLEQYC (78 aa)). At serine 1752 the chain carries O-(pantetheine 4'-phosphoryl)serine.

Pantetheine 4'-phosphate is required as a cofactor.

The catalysed reaction is holo-[ACP] + 8 malonyl-CoA + acetyl-CoA + 8 H(+) = 3,6,8,9-tetrahydroxy-1-oxo-3-(2-oxopropyl)-1,2,3,4-tetrahydroanthracene-2-carboxyl-[ACP] + 8 CO2 + 9 CoA + 2 H2O. It functions in the pathway secondary metabolite biosynthesis. Non-reducing polyketide synthase (NRPKS); part of the gene cluster that mediates the biosynthesis of asperthecin, an anthraquinone pigment. Catalyzes the formation of the aromatic polyketide from acetyl coenzyme A and seven malonyl coenzyme A molecules. Through its product template (PT) domain, catalyzes the cyclization of the polyketide backbone via C6-C11 aldolcondensation. Polyketide is subsequently hydrolyzed from the NRPKS by the action of the hydrolase aptB into endocrocin-9-anthrone. Endocrocin-9-anthrone is then oxidized into endocrocin by aptC. Endocrocin is likely to decarboxylate spontaneously to form emodin which explains why there is no decarboxylase in the asperthecin biosynthesis cluster. Finally, aptC or another endogenous oxygenase catalyzes additional oxidation steps to form asperthecin. This is Non-reducing polyketide synthase aptA from Emericella nidulans (strain FGSC A4 / ATCC 38163 / CBS 112.46 / NRRL 194 / M139) (Aspergillus nidulans).